The sequence spans 256 residues: Small ribosomal subunit protein uS2 (256 aa).

This sequence belongs to the universal ribosomal protein uS2 family.

The sequence is that of Small ribosomal subunit protein uS2 from Ruegeria sp. (strain TM1040) (Silicibacter sp.).